A 206-amino-acid chain; its full sequence is Large ribosomal subunit protein uL4 (206 aa).

The interval 44 to 87 (NRQGTQSAKTRSEVSGGGRKPWRQKGTGHARQGSTRSPQWTGGG) is disordered.

Belongs to the universal ribosomal protein uL4 family. Part of the 50S ribosomal subunit.

Functionally, one of the primary rRNA binding proteins, this protein initially binds near the 5'-end of the 23S rRNA. It is important during the early stages of 50S assembly. It makes multiple contacts with different domains of the 23S rRNA in the assembled 50S subunit and ribosome. Its function is as follows. Forms part of the polypeptide exit tunnel. The protein is Large ribosomal subunit protein uL4 of Lachnospira eligens (strain ATCC 27750 / DSM 3376 / VPI C15-48 / C15-B4) (Eubacterium eligens).